The chain runs to 59 residues: Potassium channel toxin alpha-KTx 1.1 (59 aa).

A signal peptide spans 1-22 (MKILSVLLLALIICSIVGWSEA). At glutamine 23 the chain carries Pyrrolidone carboxylic acid. 3 disulfides stabilise this stretch: cysteine 29–cysteine 50, cysteine 35–cysteine 55, and cysteine 39–cysteine 57. The interval 48–55 (GKCMNKKC) is interaction with Ca(2+)-activated K(+) channels.

Belongs to the short scorpion toxin superfamily. Potassium channel inhibitor family. Alpha-KTx 01 subfamily. As to expression, expressed by the venom gland.

The protein localises to the secreted. This toxin inhibits numerous potassium channels: shaker (Ki=227 nM), Kv1.2/KCNA2 (nanomolar range), Kv1.3/KCNA3 (nanomolar range), Kv1.5/KCNA5 (Kd&gt;100 nM), Kv1.6/KCNA6 (Ki=22 nM), KCa1.1/KCNMA1 (IC(50)=5.9 nM). It blocks channel activity by a simple bimolecular inhibition process. It also shows a weak interaction with nicotinic acetylcholine receptors (nAChR), suggesting it may weakly inhibit it. It also exhibits pH-specific antimicrobial activities against bacteria (B.subtilis, E.coli and S.aureus) and the fungus C.albicans. The polypeptide is Potassium channel toxin alpha-KTx 1.1 (Leiurus hebraeus (Hebrew deathstalker scorpion)).